Reading from the N-terminus, the 375-residue chain is Alcohol dehydrogenase 1A (375 aa).

G1 carries the N-acetylglycine modification. C46, H67, C97, C100, C103, C111, and C174 together coordinate Zn(2+). Residues 199–204 (GLGGVG), D223, K228, 293–295 (VGL), and R370 each bind NAD(+).

This sequence belongs to the zinc-containing alcohol dehydrogenase family. Class-I subfamily. Multimeric (with different ratios of monomers). Requires Zn(2+) as cofactor.

It localises to the cytoplasm. It catalyses the reaction a primary alcohol + NAD(+) = an aldehyde + NADH + H(+). The catalysed reaction is a secondary alcohol + NAD(+) = a ketone + NADH + H(+). The polypeptide is Alcohol dehydrogenase 1A (Saara hardwickii (Indian spiny-tailed lizard)).